We begin with the raw amino-acid sequence, 192 residues long: Erythropoietin (192 aa).

The first 26 residues, 1–26, serve as a signal peptide directing secretion; sequence MGVPDCLALPLLVTFLLLSLGLPVLG. A disulfide bridge connects residues cysteine 33 and cysteine 187. Asparagine 50, asparagine 64, and asparagine 109 each carry an N-linked (GlcNAc...) asparagine glycan.

Belongs to the EPO/TPO family.

The protein resides in the secreted. Functionally, hormone involved in the regulation of erythrocyte proliferation and differentiation and the maintenance of a physiological level of circulating erythrocyte mass. Binds to EPOR leading to EPOR dimerization and JAK2 activation thereby activating specific downstream effectors, including STAT1 and STAT3. In Nannospalax galili (Northern Israeli blind subterranean mole rat), this protein is Erythropoietin (EPO).